A 223-amino-acid polypeptide reads, in one-letter code: Dephospho-CoA kinase (223 aa).

Positions 22–223 (LIGLSGPSCS…LLQEVKKRGF (202 aa)) constitute a DPCK domain. 30–35 (CSGKNT) lines the ATP pocket.

This sequence belongs to the CoaE family.

It is found in the cytoplasm. The catalysed reaction is 3'-dephospho-CoA + ATP = ADP + CoA + H(+). Its pathway is cofactor biosynthesis; coenzyme A biosynthesis; CoA from (R)-pantothenate: step 5/5. In terms of biological role, catalyzes the phosphorylation of the 3'-hydroxyl group of dephosphocoenzyme A to form coenzyme A. This chain is Dephospho-CoA kinase, found in Treponema denticola (strain ATCC 35405 / DSM 14222 / CIP 103919 / JCM 8153 / KCTC 15104).